The chain runs to 281 residues: Aliphatic sulfonates import ATP-binding protein SsuB (281 aa).

Residues 40–263 (LDIRGLRKSF…QRGSAELAAL (224 aa)) enclose the ABC transporter domain. 72–79 (GRSGCGKS) lines the ATP pocket.

This sequence belongs to the ABC transporter superfamily. Aliphatic sulfonates importer (TC 3.A.1.17.2) family. The complex is composed of two ATP-binding proteins (SsuB), two transmembrane proteins (SsuC) and a solute-binding protein (SsuA).

It is found in the cell inner membrane. The enzyme catalyses ATP + H2O + aliphatic sulfonate-[sulfonate-binding protein]Side 1 = ADP + phosphate + aliphatic sulfonateSide 2 + [sulfonate-binding protein]Side 1.. Functionally, part of the ABC transporter complex SsuABC involved in aliphatic sulfonates import. Responsible for energy coupling to the transport system. The chain is Aliphatic sulfonates import ATP-binding protein SsuB from Rhodopseudomonas palustris (strain ATCC BAA-98 / CGA009).